The primary structure comprises 828 residues: Deubiquitinase MYSM1 (828 aa).

The segment covering 1 to 12 (MAAEEADVDIEG) has biased composition (acidic residues). Residues 1-31 (MAAEEADVDIEGDVVAAAGAQPGSGENTASV) are disordered. Phosphoserine is present on S110. Residues 116-167 (SYSVKWTIEEKELFEQGLAKFGRRWTKISKLIGSRTVLQVKSYARQYFKNKV) enclose the SANT domain. K187 participates in a covalent cross-link: Glycyl lysine isopeptide (Lys-Gly) (interchain with G-Cter in SUMO2). S218 carries the post-translational modification Phosphoserine. T236 bears the Phosphothreonine mark. Residues S242, S267, and S340 each carry the phosphoserine modification. In terms of domain architecture, SWIRM spans 372-470 (LKPPEQEIEI…FGCEQAVYNR (99 aa)). The MPN domain occupies 577-709 (VKVASEALLI…PLPYSQITCL (133 aa)). Zn(2+) is bound by residues H656, H658, and D669. The JAMM motif signature appears at 656-669 (HSHPAFDPNPSLRD). The short motif at 774–778 (LQKLL) is the LXXLL motif element.

This sequence belongs to the peptidase M67A family. MYSM1 subfamily. Component of a large chromatin remodeling complex, at least composed of MYSM1, PCAF, RBM10 and KIF11/TRIP5. Binds histones. Interacts with NFIL3; this interaction is critical for their correct recruitment to the ID2 locus during natural killer cell maturation.

Its subcellular location is the nucleus. It localises to the cytoplasm. Functionally, metalloprotease with deubiquitinase activity that plays important regulator roles in hematopoietic stem cell function, blood cell production and immune response. Participates in the normal programming of B-cell responses to antigen after the maturation process. Within the cytoplasm, plays critical roles in the repression of innate immunity and autoimmunity. Removes 'Lys-63'-linked polyubiquitins from TRAF3 and TRAF6 complexes. Attenuates NOD2-mediated inflammation and tissue injury by promoting 'Lys-63'-linked deubiquitination of RIPK2 component. Suppresses the CGAS-STING1 signaling pathway by cleaving STING1 'Lys-63'-linked ubiquitin chains. In the nucleus, acts as a hematopoietic transcription regulator derepressing a range of genes essential for normal stem cell differentiation including EBF1 and PAX5 in B-cells, ID2 in NK-cell progenitor or FLT3 in dendritic cell precursors. Deubiquitinates monoubiquitinated histone H2A, a specific tag for epigenetic transcriptional repression, leading to dissociation of histone H1 from the nucleosome. This is Deubiquitinase MYSM1 (MYSM1) from Homo sapiens (Human).